A 224-amino-acid chain; its full sequence is Putative adhesin A1G_07050 (224 aa).

An N-terminal signal peptide occupies residues 1–22; that stretch reads MKKLLLIAATSATILSSSVSFA.

The sequence is that of Putative adhesin A1G_07050 from Rickettsia rickettsii (strain Sheila Smith).